A 224-amino-acid polypeptide reads, in one-letter code: Inner membrane-spanning protein YciB (224 aa).

The next 6 membrane-spanning stretches (helical) occupy residues 20–40, 61–81, 86–106, 123–143, 156–176, and 187–207; these read GVNPVLKLVLELGPLLVFFFA, IFVATGLFMAATAIALIASWL, LPIMPMVSGVVVFIFGALTLY, LFGGVLLGGLYFGRSLLGYVF, KLTFRWGLFFLFLAVVNEVVW, and FKVWGIMPITLLFTFSQMPLI.

Belongs to the YciB family.

The protein localises to the cell inner membrane. Functionally, plays a role in cell envelope biogenesis, maintenance of cell envelope integrity and membrane homeostasis. The chain is Inner membrane-spanning protein YciB from Mesorhizobium japonicum (strain LMG 29417 / CECT 9101 / MAFF 303099) (Mesorhizobium loti (strain MAFF 303099)).